The chain runs to 2492 residues: Talin-A (2492 aa).

The 282-residue stretch at 84 to 365 (RPQKFKLLDG…GYIEIIMKAR (282 aa)) folds into the FERM domain. The 243-residue stretch at 2250-2492 (EEDNVLEDLE…NSRKQNYNKN (243 aa)) folds into the I/LWEQ domain.

The protein localises to the cytoplasm. The protein resides in the cytoskeleton. It localises to the cell cortex. Functionally, actin-binding protein that may be involved in the control of cell motility and chemotaxis. This Dictyostelium discoideum (Social amoeba) protein is Talin-A (talA).